We begin with the raw amino-acid sequence, 390 residues long: Telobox protein 1 (390 aa).

A disordered region spans residues glutamate 30–lysine 57. Over residues proline 32–proline 48 the composition is skewed to basic and acidic residues. HTH myb-type domains lie at lysine 50–tyrosine 109 and serine 135–tyrosine 193. The H-T-H motif DNA-binding region spans tryptophan 78 to leucine 105. A disordered region spans residues asparagine 115 to phenylalanine 143. The segment at residues tryptophan 162–phenylalanine 189 is a DNA-binding region (H-T-H motif). Polar residues-rich tracts occupy residues serine 244–proline 257 and isoleucine 322–glutamine 340. Disordered regions lie at residues serine 244–glutamine 278 and glutamine 316–glycine 390. Positions proline 347–proline 360 are enriched in low complexity.

The protein localises to the nucleus. Functionally, general transcription factor with prominent roles in controlling histone levels and stability. Binds and regulates the activities of many promoters, including those controlling the expression of all four types of canonical histones. Is also involved in the centromeric loading of cnp1 and maintenance of centromere identity. Moreover, regulates the expression of cdc2, a protease capable of histone clipping. This chain is Telobox protein 1, found in Schizosaccharomyces pombe (strain 972 / ATCC 24843) (Fission yeast).